Here is a 554-residue protein sequence, read N- to C-terminus: MSEAEARPTNFIRQIIDEDLASGKHTTVHTRFPPEPNGYLHIGHAKSICLNFGIAQDYKGQCNLRFDDTNPVKEDIEYVESIKNDVEWLGFHWSGNVRYSSDYFDQLHAYAIELINKGLAYVDELTPEQIREYRGTLTQPGKNSPYRDRSVEENLALFEKMRTGGFEEGKACLRAKIDMASPFIVMRDPVLYRIKFAEHHQTGNKWCIYPMYDFTHCISDALEGITHSLCTLEFQDNRRLYDWVLDNITIPVHPRQYEFSRLNLEYTVMSKRKLNLLVTDKHVEGWDDPRMPTISGLRRRGYTAASIREFCKRIGVTKQDNTIEMASLESCIREDLNENAPRAMAVIDPVKLVIENYQGEGEMVTMPNHPNKPEMGSRQVPFSGEIWIDRADFREEANKQYKRLVLGKEVRLRNAYVIKAERVEKDAEGNITTIFCTYDADTLSKDPADGRKVKGVIHWVSAAHALPIEIRLYDRLFSVPNPGAADDFLSVINPESLVIKQGFAEPSLKDAVAGKAFQFEREGYFCLDSRHSTAEKPVFNRTVGLRDTWAKVGE.

A 'HIGH' region motif is present at residues Pro-34–His-44. ATP contacts are provided by residues Glu-35–Asn-37 and His-41–Ser-47. Residues Asp-67 and Tyr-212 each coordinate L-glutamine. ATP-binding positions include Thr-231, Arg-261–Leu-262, and Met-269–Lys-271. The 'KMSKS' region signature appears at Val-268 to Arg-272. Residues Thr-317–Glu-324 form an interaction with tRNA region.

This sequence belongs to the class-I aminoacyl-tRNA synthetase family. In terms of assembly, monomer.

It is found in the cytoplasm. It catalyses the reaction tRNA(Gln) + L-glutamine + ATP = L-glutaminyl-tRNA(Gln) + AMP + diphosphate. The sequence is that of Glutamine--tRNA ligase from Escherichia coli O7:K1 (strain IAI39 / ExPEC).